A 379-amino-acid chain; its full sequence is Cytochrome b (379 aa).

The next 4 helical transmembrane spans lie at 33–53 (FGSLLGVCLMIQILTGLFLAM), 77–98 (WLIRYLHANGASMFFICLFIHV), 113–133 (WNIGIILFLTTMATAFVGYVL), and 178–198 (FFAFHFILPFIITAFALVHLL). 2 residues coordinate heme b: His83 and His97. Heme b-binding residues include His182 and His196. His201 contacts a ubiquinone. A run of 4 helical transmembrane segments spans residues 226–246 (IKDLLGIFLLLLALMILALFF), 288–308 (LGGVLALILSILILAIFPLLN), 320–340 (ITQTIYWTFIANLLVLTWIGG), and 347–367 (FTTIGQIASITYFTXIIILMP).

This sequence belongs to the cytochrome b family. As to quaternary structure, the cytochrome bc1 complex contains 11 subunits: 3 respiratory subunits (MT-CYB, CYC1 and UQCRFS1), 2 core proteins (UQCRC1 and UQCRC2) and 6 low-molecular weight proteins (UQCRH/QCR6, UQCRB/QCR7, UQCRQ/QCR8, UQCR10/QCR9, UQCR11/QCR10 and a cleavage product of UQCRFS1). This cytochrome bc1 complex then forms a dimer. It depends on heme b as a cofactor.

The protein localises to the mitochondrion inner membrane. Functionally, component of the ubiquinol-cytochrome c reductase complex (complex III or cytochrome b-c1 complex) that is part of the mitochondrial respiratory chain. The b-c1 complex mediates electron transfer from ubiquinol to cytochrome c. Contributes to the generation of a proton gradient across the mitochondrial membrane that is then used for ATP synthesis. The protein is Cytochrome b (MT-CYB) of Akodon affinis (Colombian grass mouse).